The chain runs to 620 residues: Alkaline nuclease (620 aa).

Positions Met1–Lys10 are enriched in low complexity. Disordered stretches follow at residues Met1 to Ala122 and Ala595 to Arg620. Basic and acidic residues predominate over residues Arg11–Pro23. Over residues Arg40 to Pro49 the composition is skewed to pro residues. The span at Pro603–Arg620 shows a compositional bias: low complexity.

This sequence belongs to the herpesviridae alkaline nuclease family. As to quaternary structure, interacts with major DNA-binding protein; this interaction increases the nuclease processivity of the alkaline exonuclease.

The protein resides in the host nucleus. The protein localises to the host cytoplasm. Plays a role in processing non linear or branched viral DNA intermediates in order to promote the production of mature packaged unit-length linear progeny viral DNA molecules. Exhibits endonuclease and exonuclease activities and accepts both double-stranded and single-stranded DNA as substrate. Exonuclease digestion of DNA is in the 5'-&gt; 3' direction and the products are 5'-monophosphate nucleosides. Additionally, forms a recombinase with the major DNA-binding protein, which displays strand exchange activity. This chain is Alkaline nuclease, found in Homo sapiens (Human).